The following is a 659-amino-acid chain: Chaperone protein DnaK (659 aa).

The residue at position 201 (Thr-201) is a Phosphothreonine; by autocatalysis. Positions 571 to 592 (RSALKEDAPTEKIKEASDELSR) are enriched in basic and acidic residues. The interval 571 to 659 (RSALKEDAPT…DVEIVDKPND (89 aa)) is disordered. A compositionally biased stretch (low complexity) spans 600-613 (AMQSQSASAAANAQ).

It belongs to the heat shock protein 70 family.

Acts as a chaperone. The chain is Chaperone protein DnaK from Chlamydia abortus (strain DSM 27085 / S26/3) (Chlamydophila abortus).